Here is a 314-residue protein sequence, read N- to C-terminus: MAPPQVLAFGLLVAAATAAVAADQEGCVCENYKLTTNCSVNALGQCQCTSVGTQHSVICTKLATKCLVMKAEMNHSKSGRRGKPEGAIQNNDGLYDPECDDKGLFKAKQCNGTSTCWCVNTAGVRRTDKDSEISCSEPVRTYWIIIELKHKTREKPYDLQSLQSALKDVITNRYQLDPKYITNILYENDVITIDLVQNSSQKTQNDVDIADVAYYFEKDVKDESLFHSKRMDLRVNGELLDLDPGRTSIYYVDEKPPEFSMQGLQAGIIAVIVVVVVAIIAGIIVLVVSRKKSMTKYEKAEIKEMGEMHRELNA.

The N-terminal stretch at 1–23 (MAPPQVLAFGLLVAAATAAVAAD) is a signal peptide. Topologically, residues 24-265 (QEGCVCENYK…PPEFSMQGLQ (242 aa)) are extracellular. 6 disulfide bridges follow: cysteine 27–cysteine 46, cysteine 29–cysteine 59, cysteine 38–cysteine 48, cysteine 66–cysteine 99, cysteine 110–cysteine 116, and cysteine 118–cysteine 135. The N-linked (GlcNAc...) asparagine glycan is linked to asparagine 37. The 73-residue stretch at 63–135 (ATKCLVMKAE…RTDKDSEISC (73 aa)) folds into the Thyroglobulin type-1 domain. N-linked (GlcNAc...) asparagine glycosylation is found at asparagine 74 and asparagine 111. Asparagine 198 is a glycosylation site (N-linked (GlcNAc...) asparagine). Residues 266 to 288 (AGIIAVIVVVVVAIIAGIIVLVV) form a helical membrane-spanning segment. The Cytoplasmic segment spans residues 289 to 314 (SRKKSMTKYEKAEIKEMGEMHRELNA).

This sequence belongs to the EPCAM family. In terms of assembly, monomer. Interacts with phosphorylated CLDN7. In terms of processing, glycosylation at Asn-198 is crucial for protein stability.

The protein resides in the lateral cell membrane. Its subcellular location is the cell junction. The protein localises to the tight junction. May act as a physical homophilic interaction molecule between intestinal epithelial cells (IECs) and intraepithelial lymphocytes (IELs) at the mucosal epithelium for providing immunological barrier as a first line of defense against mucosal infection. Plays a role in embryonic stem cells proliferation and differentiation. Up-regulates the expression of FABP5, MYC and cyclins A and E. The chain is Epithelial cell adhesion molecule (EPCAM) from Bos taurus (Bovine).